Consider the following 100-residue polypeptide: Putative membrane protein insertion efficiency factor (100 aa).

The segment at 73 to 100 (DPVPDLPGSAPEENGRPSPDGQHSGSGG) is disordered.

This sequence belongs to the UPF0161 family.

The protein localises to the cell inner membrane. Its function is as follows. Could be involved in insertion of integral membrane proteins into the membrane. This chain is Putative membrane protein insertion efficiency factor, found in Synechococcus sp. (strain JA-3-3Ab) (Cyanobacteria bacterium Yellowstone A-Prime).